Consider the following 459-residue polypeptide: Putrescine aminotransferase (459 aa).

Pyridoxal 5'-phosphate is bound by residues 150 to 151 (GT) and Q274. The residue at position 300 (K300) is an N6-(pyridoxal phosphate)lysine. Residue T332 participates in pyridoxal 5'-phosphate binding.

Belongs to the class-III pyridoxal-phosphate-dependent aminotransferase family. Putrescine aminotransferase subfamily. The cofactor is pyridoxal 5'-phosphate.

The enzyme catalyses an alkane-alpha,omega-diamine + 2-oxoglutarate = an omega-aminoaldehyde + L-glutamate. The catalysed reaction is putrescine + 2-oxoglutarate = 1-pyrroline + L-glutamate + H2O. It carries out the reaction cadaverine + 2-oxoglutarate = 5-aminopentanal + L-glutamate. It functions in the pathway amine and polyamine degradation; putrescine degradation; 4-aminobutanal from putrescine (transaminase route): step 1/1. Functionally, catalyzes the aminotransferase reaction from putrescine to 2-oxoglutarate, leading to glutamate and 4-aminobutanal, which spontaneously cyclizes to form 1-pyrroline. This is the first step in one of two pathways for putrescine degradation, where putrescine is converted into 4-aminobutanoate (gamma-aminobutyrate or GABA) via 4-aminobutanal. Also functions as a cadaverine transaminase in a a L-lysine degradation pathway to succinate that proceeds via cadaverine, glutarate and L-2-hydroxyglutarate. This Shigella boydii serotype 4 (strain Sb227) protein is Putrescine aminotransferase.